Here is a 467-residue protein sequence, read N- to C-terminus: MSVRIDEPQLFVSMSKEPTQETVNVGGHHDDSSSNCDERVDDQTEEQKSPPASPDLTANLNVFDLESRQKVVQRLLNSQLNLSNLRAPLNLPPIFQALQGPFSIQQQLLGLASGLTAISPGLDDYDEENTNQGEPEDLTLGGFRKETSVKSEEPSESGINASGPAWSYEEQFKQLYELSDDVKRKEWLDDWLNFMHRIGKPVTRIPIMAKQVLDLYELYRLVVQHGGLVEIINKKLWREITKGLNLPSSITSAAFTLRTQYQKYLYDYECEKEKLSNQSDLQQAIDGNRREAPGRRTAPSFPLPFQLPHAASAAATMLNNQLNGLGMRNDLLDDENTLSLQASGLFGTSYGAEQMAILEAHQRNLERAQRAVQQQVARQSLGLTACSNGNGGNIHNSGRESTSSNDSDIPAKRPKLENDVKTNGASSMRISTKHSDNSKTSMSVSMEINGITYQGVLFALDETVSES.

The tract at residues 1-56 is disordered; the sequence is MSVRIDEPQLFVSMSKEPTQETVNVGGHHDDSSSNCDERVDDQTEEQKSPPASPDL. Residues 27 to 48 show a composition bias toward basic and acidic residues; that stretch reads GHHDDSSSNCDERVDDQTEEQK. The region spanning 181–273 is the ARID domain; sequence DVKRKEWLDD…YLYDYECEKE (93 aa). Residues 356–464 enclose the REKLES domain; the sequence is AILEAHQRNL…GVLFALDETV (109 aa). The tract at residues 383 to 441 is disordered; the sequence is LTACSNGNGGNIHNSGRESTSSNDSDIPAKRPKLENDVKTNGASSMRISTKHSDNSKTS. Residues 409-420 are compositionally biased toward basic and acidic residues; that stretch reads IPAKRPKLENDV. Residues 421–430 are compositionally biased toward polar residues; the sequence is KTNGASSMRI.

Present in IL2 and URA neurons, and in AVD and PVC interneurons. Present in muscles from head and pharynx (at protein level).

The protein resides in the nucleus. Transcription factor. Regulates neuronal subtype identity. Involved in motor neuron fate determination and maintenance, acting as a transcriptional repressor to counteract gene activation by transcription factor unc-3 in a subset of motor neurons. Probably acts by binding to specific promoter elements. Promotes differentiation of URA sensory neurons and prevents them from expressing male-specific CEM neuronal features. Promotes differentiation of AVD and PVC interneurons and their glutamate receptor expression. The chain is AT-rich interactive domain-containing protein cfi-1 (cfi-1) from Caenorhabditis elegans.